A 118-amino-acid polypeptide reads, in one-letter code: Vacuolar ATPase assembly integral membrane protein vma-21 (118 aa).

Topologically, residues 1-35 are cytoplasmic; it reads MATRRIISQEKTLLEKDDRIGSSPAASEKSNITPA. The helical transmembrane segment at 36-56 threads the bilayer; it reads VPASVIIKLLAFTFAMIVIPI. The Lumenal portion of the chain corresponds to 57–73; it reads SSYFLTVDRLFKGNSTY. Residues 74 to 94 traverse the membrane as a helical segment; sequence AGATAAIMANVVLIGYIIVAM. The Cytoplasmic portion of the chain corresponds to 95-118; sequence AEDQSDQENEKKGGGGKGEGKKDL. The tract at residues 98 to 118 is disordered; the sequence is QSDQENEKKGGGGKGEGKKDL. Over residues 102-118 the composition is skewed to basic and acidic residues; sequence ENEKKGGGGKGEGKKDL. The Prevents secretion from ER motif lies at 115–118; sequence KKDL.

It belongs to the VMA21 family.

Its subcellular location is the endoplasmic reticulum membrane. The protein localises to the endoplasmic reticulum-Golgi intermediate compartment membrane. The protein resides in the cytoplasmic vesicle. It localises to the COPII-coated vesicle membrane. Required for the assembly of the V0 complex of the vacuolar ATPase (V-ATPase) in the endoplasmic reticulum. This is Vacuolar ATPase assembly integral membrane protein vma-21 (vma-21) from Neurospora crassa (strain ATCC 24698 / 74-OR23-1A / CBS 708.71 / DSM 1257 / FGSC 987).